The following is a 211-amino-acid chain: Transcriptional regulatory protein LiaR (211 aa).

Positions 3–119 constitute a Response regulatory domain; it reads RVLLIDDHEM…EIADAIRAAS (117 aa). Aspartate 54 carries the post-translational modification 4-aspartylphosphate. Positions 143–208 constitute an HTH luxR-type domain; the sequence is NALPHESLTK…QAAVYAHRNH (66 aa). A DNA-binding region (H-T-H motif) is located at residues 167–186; the sequence is NKEIGEELFITIKTVKTHIT.

Phosphorylated by LiaS.

It localises to the cytoplasm. Functionally, member of the two-component regulatory system LiaS/LiaR probably involved in response to a subset of cell wall-active antibiotics that interfere with the lipid II cycle in the cytoplasmic membrane (bacitracin, nisin, ramoplanin and vancomycin). Also seems to be involved in response to cationic antimicrobial peptides and secretion stress. LiaR regulates the transcription of the liaIHGFSR operon. In Bacillus subtilis (strain 168), this protein is Transcriptional regulatory protein LiaR (liaR).